Here is a 220-residue protein sequence, read N- to C-terminus: uncharacterized protein (220 aa).

Residues D165 to I202 are a coiled coil.

This is an uncharacterized protein from Pasteurella multocida (strain Pm70).